The sequence spans 370 residues: Protein Mut11 (370 aa).

The disordered stretch occupies residues 1–22 (MARGPGDTDMDEASADAAIPSS). 7 WD repeats span residues 38–77 (GHTK…RVNT), 80–119 (GHSC…CLRT), 122–162 (GHTN…CLRE), 165–204 (AHSD…CLKT), 208–247 (RDSP…TRRT), 262–301 (GFLG…VVGR), and 329–370 (GHTA…PAAA).

It belongs to the WD repeat WDR5/wds family.

Its subcellular location is the nucleus. Part of a complex involved in 'Lys-4' histone H3 methylation. In Chlamydomonas reinhardtii (Chlamydomonas smithii), this protein is Protein Mut11 (Mut11).